Here is a 270-residue protein sequence, read N- to C-terminus: Regulatory protein RecX (270 aa).

It belongs to the RecX family.

Its subcellular location is the cytoplasm. Its function is as follows. Modulates RecA activity. The protein is Regulatory protein RecX of Bacillus cereus (strain AH187).